The following is a 92-amino-acid chain: Protein RESPONSE TO LOW SULFUR 4 (92 aa).

A coiled-coil region spans residues 8–63 (VMVAASEVEELRQKNGEMEKAVEEMRKEMLQLWRRTQVAEEAEEHLCSQLAELEAE).

In terms of biological role, required for flower development in short-day conditions. This Arabidopsis thaliana (Mouse-ear cress) protein is Protein RESPONSE TO LOW SULFUR 4.